The primary structure comprises 75 residues: Putative defensin-like protein 271 (75 aa).

Positions 1-23 (MTSMKLHIVALCIIVSFLVNVQS) are cleaved as a signal peptide. Cystine bridges form between C33/C72, C39/C61, C45/C70, and C49/C71.

This sequence belongs to the DEFL family.

The protein localises to the secreted. The sequence is that of Putative defensin-like protein 271 from Arabidopsis thaliana (Mouse-ear cress).